We begin with the raw amino-acid sequence, 375 residues long: Phosphoribulokinase, chloroplastic (375 aa).

Residues 1-31 (MAFTMRAPAPRATAQSRVTANRARRSLVVRA) constitute a chloroplast transit peptide. A disulfide bond links cysteine 47 and cysteine 86.

This sequence belongs to the phosphoribulokinase family. As to quaternary structure, component of a complex that contains two dimers of PRK, two tetramers of GAPDH and CP12.

It is found in the plastid. The protein localises to the chloroplast. It catalyses the reaction D-ribulose 5-phosphate + ATP = D-ribulose 1,5-bisphosphate + ADP + H(+). It participates in carbohydrate biosynthesis; Calvin cycle. With respect to regulation, light regulated via thioredoxin by reversible oxidation/reduction of sulfhydryl/disulfide groups. The polypeptide is Phosphoribulokinase, chloroplastic (PRKA) (Chlamydomonas reinhardtii (Chlamydomonas smithii)).